The following is a 64-amino-acid chain: Beta-defensin 1 (64 aa).

Residues 1–22 (MRLHHLLLVLFFVVLSAGSGFT) form the signal peptide. Intrachain disulfides connect cysteine 31–cysteine 60, cysteine 38–cysteine 53, and cysteine 43–cysteine 61.

This sequence belongs to the beta-defensin family. In terms of assembly, monomer. Homodimer.

The protein localises to the secreted. It is found in the membrane. Its function is as follows. Has bactericidal activity. May act as a ligand for C-C chemokine receptor CCR6. Positively regulates the sperm motility and bactericidal activity in a CCR6-dependent manner. Binds to CCR6 and triggers Ca2+ mobilization in the sperm which is important for its motility. In Ovis aries (Sheep), this protein is Beta-defensin 1 (DEFB1).